A 548-amino-acid polypeptide reads, in one-letter code: Chaperonin GroEL (548 aa).

ATP is bound by residues 30-33, Lys-51, 87-91, Gly-415, 479-481, and Asp-495; these read TLGP, DGTTT, and NAA.

Belongs to the chaperonin (HSP60) family. As to quaternary structure, forms a cylinder of 14 subunits composed of two heptameric rings stacked back-to-back. Interacts with the co-chaperonin GroES.

Its subcellular location is the cytoplasm. The catalysed reaction is ATP + H2O + a folded polypeptide = ADP + phosphate + an unfolded polypeptide.. Functionally, together with its co-chaperonin GroES, plays an essential role in assisting protein folding. The GroEL-GroES system forms a nano-cage that allows encapsulation of the non-native substrate proteins and provides a physical environment optimized to promote and accelerate protein folding. The polypeptide is Chaperonin GroEL (Salmonella arizonae (strain ATCC BAA-731 / CDC346-86 / RSK2980)).